The primary structure comprises 226 residues: Enolase-phosphatase E1 (226 aa).

Belongs to the HAD-like hydrolase superfamily. MasA/MtnC family. Monomer. Mg(2+) serves as cofactor.

The enzyme catalyses 5-methylsulfanyl-2,3-dioxopentyl phosphate + H2O = 1,2-dihydroxy-5-(methylsulfanyl)pent-1-en-3-one + phosphate. The protein operates within amino-acid biosynthesis; L-methionine biosynthesis via salvage pathway; L-methionine from S-methyl-5-thio-alpha-D-ribose 1-phosphate: step 3/6. It participates in amino-acid biosynthesis; L-methionine biosynthesis via salvage pathway; L-methionine from S-methyl-5-thio-alpha-D-ribose 1-phosphate: step 4/6. Bifunctional enzyme that catalyzes the enolization of 2,3-diketo-5-methylthiopentyl-1-phosphate (DK-MTP-1-P) into the intermediate 2-hydroxy-3-keto-5-methylthiopentenyl-1-phosphate (HK-MTPenyl-1-P), which is then dephosphorylated to form the acireductone 1,2-dihydroxy-3-keto-5-methylthiopentene (DHK-MTPene). The protein is Enolase-phosphatase E1 of Shewanella pealeana (strain ATCC 700345 / ANG-SQ1).